A 362-amino-acid chain; its full sequence is 3-dehydroquinate synthase (362 aa).

NAD(+) contacts are provided by residues 72-77 (SGEQAK), 106-110 (GVVGD), 130-131 (TT), K142, and K151. Zn(2+) contacts are provided by E184, H246, and H263.

The protein belongs to the sugar phosphate cyclases superfamily. Dehydroquinate synthase family. Requires NAD(+) as cofactor. The cofactor is Co(2+). It depends on Zn(2+) as a cofactor.

It localises to the cytoplasm. The enzyme catalyses 7-phospho-2-dehydro-3-deoxy-D-arabino-heptonate = 3-dehydroquinate + phosphate. Its pathway is metabolic intermediate biosynthesis; chorismate biosynthesis; chorismate from D-erythrose 4-phosphate and phosphoenolpyruvate: step 2/7. Functionally, catalyzes the conversion of 3-deoxy-D-arabino-heptulosonate 7-phosphate (DAHP) to dehydroquinate (DHQ). This is 3-dehydroquinate synthase from Bacillus subtilis (strain 168).